A 627-amino-acid polypeptide reads, in one-letter code: tRNA uridine 5-carboxymethylaminomethyl modification enzyme MnmG (627 aa).

FAD is bound by residues 16–21, Val128, and Ser183; that span reads GAGHAG. 277 to 291 is a binding site for NAD(+); the sequence is GPRYCPSIEDKIVRF. Gln374 contacts FAD.

Belongs to the MnmG family. In terms of assembly, homodimer. Heterotetramer of two MnmE and two MnmG subunits. The cofactor is FAD.

It localises to the cytoplasm. Its function is as follows. NAD-binding protein involved in the addition of a carboxymethylaminomethyl (cmnm) group at the wobble position (U34) of certain tRNAs, forming tRNA-cmnm(5)s(2)U34. This is tRNA uridine 5-carboxymethylaminomethyl modification enzyme MnmG from Finegoldia magna (strain ATCC 29328 / DSM 20472 / WAL 2508) (Peptostreptococcus magnus).